Consider the following 729-residue polypeptide: ATP-dependent RNA helicase DHX15 homolog (729 aa).

Residues M1 to S25 form a disordered region. One can recognise a Helicase ATP-binding domain in the interval M82 to P246. ATP is bound at residue G95 to T102. Positions D193–H196 match the DEAH box motif. One can recognise a Helicase C-terminal domain in the interval T271–G451.

Belongs to the DEAD box helicase family. DEAH subfamily. DDX15/PRP43 sub-subfamily.

The catalysed reaction is ATP + H2O = ADP + phosphate + H(+). Its function is as follows. RNA helicase involved in mRNA processing and antiviral innate immunity. Acts as an activator of the p38 MAPK cascade. This Drosophila melanogaster (Fruit fly) protein is ATP-dependent RNA helicase DHX15 homolog.